The sequence spans 453 residues: Bifunctional protein GlmU (453 aa).

The pyrophosphorylase stretch occupies residues 1–226 (MKFSAVILAA…PIEVEGVNDR (226 aa)). Residues 8–11 (LAAG), Lys22, Gln73, 78–79 (GT), 100–102 (YGD), Gly137, Glu151, Asn166, and Asn224 contribute to the UDP-N-acetyl-alpha-D-glucosamine site. Asp102 lines the Mg(2+) pocket. Asn224 contacts Mg(2+). Residues 227–247 (AQLARLERAFQAAQAKKLLEQ) form a linker region. Positions 248 to 453 (GVMLRDPARF…TGWQRPVKKK (206 aa)) are N-acetyltransferase. Arg330 and Lys348 together coordinate UDP-N-acetyl-alpha-D-glucosamine. The active-site Proton acceptor is the His360. 2 residues coordinate UDP-N-acetyl-alpha-D-glucosamine: Tyr363 and Asn374. Acetyl-CoA contacts are provided by residues Ala377, 383–384 (NY), Ser402, Ala420, and Arg437.

This sequence in the N-terminal section; belongs to the N-acetylglucosamine-1-phosphate uridyltransferase family. The protein in the C-terminal section; belongs to the transferase hexapeptide repeat family. In terms of assembly, homotrimer. Mg(2+) is required as a cofactor.

It is found in the cytoplasm. The enzyme catalyses alpha-D-glucosamine 1-phosphate + acetyl-CoA = N-acetyl-alpha-D-glucosamine 1-phosphate + CoA + H(+). It catalyses the reaction N-acetyl-alpha-D-glucosamine 1-phosphate + UTP + H(+) = UDP-N-acetyl-alpha-D-glucosamine + diphosphate. Its pathway is nucleotide-sugar biosynthesis; UDP-N-acetyl-alpha-D-glucosamine biosynthesis; N-acetyl-alpha-D-glucosamine 1-phosphate from alpha-D-glucosamine 6-phosphate (route II): step 2/2. The protein operates within nucleotide-sugar biosynthesis; UDP-N-acetyl-alpha-D-glucosamine biosynthesis; UDP-N-acetyl-alpha-D-glucosamine from N-acetyl-alpha-D-glucosamine 1-phosphate: step 1/1. It functions in the pathway bacterial outer membrane biogenesis; LPS lipid A biosynthesis. Catalyzes the last two sequential reactions in the de novo biosynthetic pathway for UDP-N-acetylglucosamine (UDP-GlcNAc). The C-terminal domain catalyzes the transfer of acetyl group from acetyl coenzyme A to glucosamine-1-phosphate (GlcN-1-P) to produce N-acetylglucosamine-1-phosphate (GlcNAc-1-P), which is converted into UDP-GlcNAc by the transfer of uridine 5-monophosphate (from uridine 5-triphosphate), a reaction catalyzed by the N-terminal domain. This Vibrio vulnificus (strain CMCP6) protein is Bifunctional protein GlmU.